The primary structure comprises 509 residues: MDEFQREGNKHRFWQQCFLYQIFFGEDLNAMVHDHHLDRSSSFERTEILISNYFSFLTVKRLIRRIRQQNDSTGLFGNCDPNQFIDRNRNSYSESVLEALTVILEVSFAMRSKHFLEGINGWKSIRSIHCIFPLMEDKFPYSNYISDIRVPYSIHPELLVRTFRRWIRDTPSLHLLRFILHSWKNSFSAENLQKAMVAPRENMRLSLFLWNSYVYECESFLVPLLKRFSHSQSLLYGSFPNXNHFVRKIKHIVIFPXINISTXRIWLLKDPFIQYVRYGERSLIALKGTHLQVKKCRYHLFHFWQYYFHLWSQPYRICILELSKNYSFFLGYFLSFKMKPLVVRTKMLNDLFITNLITNELNPIAPIRSILFFLAKERFCDISGQTISKLSWTSLSDDDILDRFDRICRNLFHYYSGSINPDGLYYIKYILLLPCAKTLACKHKSTIRVVREESGSELFTKSFSKEREFISSSFSKTRSQRERFWNSDIIQINPLSNSWQKIQNKQVEN.

It belongs to the intron maturase 2 family. MatK subfamily.

It localises to the plastid. Its subcellular location is the chloroplast. Usually encoded in the trnK tRNA gene intron. Probably assists in splicing its own and other chloroplast group II introns. The chain is Maturase K from Amentotaxus argotaenia (Chinese flowering yew).